Consider the following 206-residue polypeptide: Large ribosomal subunit protein uL4 (206 aa).

Belongs to the universal ribosomal protein uL4 family. As to quaternary structure, part of the 50S ribosomal subunit.

In terms of biological role, one of the primary rRNA binding proteins, this protein initially binds near the 5'-end of the 23S rRNA. It is important during the early stages of 50S assembly. It makes multiple contacts with different domains of the 23S rRNA in the assembled 50S subunit and ribosome. Its function is as follows. Forms part of the polypeptide exit tunnel. In Jannaschia sp. (strain CCS1), this protein is Large ribosomal subunit protein uL4.